A 183-amino-acid polypeptide reads, in one-letter code: ATP synthase subunit delta (183 aa).

Belongs to the ATPase delta chain family. F-type ATPases have 2 components, F(1) - the catalytic core - and F(0) - the membrane proton channel. F(1) has five subunits: alpha(3), beta(3), gamma(1), delta(1), epsilon(1). CF(0) has four main subunits: a(1), b(1), b'(1) and c(10-14). The alpha and beta chains form an alternating ring which encloses part of the gamma chain. F(1) is attached to F(0) by a central stalk formed by the gamma and epsilon chains, while a peripheral stalk is formed by the delta, b and b' chains.

Its subcellular location is the cellular thylakoid membrane. In terms of biological role, f(1)F(0) ATP synthase produces ATP from ADP in the presence of a proton or sodium gradient. F-type ATPases consist of two structural domains, F(1) containing the extramembraneous catalytic core and F(0) containing the membrane proton channel, linked together by a central stalk and a peripheral stalk. During catalysis, ATP synthesis in the catalytic domain of F(1) is coupled via a rotary mechanism of the central stalk subunits to proton translocation. This protein is part of the stalk that links CF(0) to CF(1). It either transmits conformational changes from CF(0) to CF(1) or is implicated in proton conduction. This chain is ATP synthase subunit delta, found in Prochlorococcus marinus (strain SARG / CCMP1375 / SS120).